The chain runs to 333 residues: Protoheme IX farnesyltransferase (333 aa).

The next 7 helical transmembrane spans lie at 64 to 84 (LICT…LNCL), 110 to 130 (TVFL…ISGV), 133 to 153 (LAAG…TVIL), 161 to 181 (IVFG…AATG), 189 to 209 (WLFG…AILL), 246 to 266 (IMGV…LLPF), and 287 to 307 (AKSL…LLLI).

The protein belongs to the UbiA prenyltransferase family. Protoheme IX farnesyltransferase subfamily.

Its subcellular location is the cell inner membrane. The enzyme catalyses heme b + (2E,6E)-farnesyl diphosphate + H2O = Fe(II)-heme o + diphosphate. It functions in the pathway porphyrin-containing compound metabolism; heme O biosynthesis; heme O from protoheme: step 1/1. Converts heme B (protoheme IX) to heme O by substitution of the vinyl group on carbon 2 of heme B porphyrin ring with a hydroxyethyl farnesyl side group. This Prochlorococcus marinus (strain MIT 9312) protein is Protoheme IX farnesyltransferase.